A 97-amino-acid polypeptide reads, in one-letter code: MSRKCELTGVGVLYGNNVSHSQRKTRRRFKPNLRSVKFTSDITAGEYRLSVNARCISSVEKAGGFDAYILKADDNVLSSNARAIKKKIIQTKTAKSL.

Belongs to the bacterial ribosomal protein bL28 family.

This Rickettsia peacockii (strain Rustic) protein is Large ribosomal subunit protein bL28.